The sequence spans 295 residues: Pyridoxal 5'-phosphate synthase subunit PdxS (295 aa).

Asp-25 is a binding site for D-ribose 5-phosphate. Lys-82 (schiff-base intermediate with D-ribose 5-phosphate) is an active-site residue. Gly-154 lines the D-ribose 5-phosphate pocket. Arg-166 is a binding site for D-glyceraldehyde 3-phosphate. D-ribose 5-phosphate contacts are provided by residues Gly-215 and 236–237; that span reads GS.

Belongs to the PdxS/SNZ family. In the presence of PdxT, forms a dodecamer of heterodimers.

The catalysed reaction is aldehydo-D-ribose 5-phosphate + D-glyceraldehyde 3-phosphate + L-glutamine = pyridoxal 5'-phosphate + L-glutamate + phosphate + 3 H2O + H(+). It participates in cofactor biosynthesis; pyridoxal 5'-phosphate biosynthesis. Catalyzes the formation of pyridoxal 5'-phosphate from ribose 5-phosphate (RBP), glyceraldehyde 3-phosphate (G3P) and ammonia. The ammonia is provided by the PdxT subunit. Can also use ribulose 5-phosphate and dihydroxyacetone phosphate as substrates, resulting from enzyme-catalyzed isomerization of RBP and G3P, respectively. The chain is Pyridoxal 5'-phosphate synthase subunit PdxS from Macrococcus caseolyticus (strain JCSC5402) (Macrococcoides caseolyticum).